Consider the following 237-residue polypeptide: Phosphoribosylaminoimidazole-succinocarboxamide synthase (237 aa).

It belongs to the SAICAR synthetase family.

The catalysed reaction is 5-amino-1-(5-phospho-D-ribosyl)imidazole-4-carboxylate + L-aspartate + ATP = (2S)-2-[5-amino-1-(5-phospho-beta-D-ribosyl)imidazole-4-carboxamido]succinate + ADP + phosphate + 2 H(+). Its pathway is purine metabolism; IMP biosynthesis via de novo pathway; 5-amino-1-(5-phospho-D-ribosyl)imidazole-4-carboxamide from 5-amino-1-(5-phospho-D-ribosyl)imidazole-4-carboxylate: step 1/2. In Halalkalibacterium halodurans (strain ATCC BAA-125 / DSM 18197 / FERM 7344 / JCM 9153 / C-125) (Bacillus halodurans), this protein is Phosphoribosylaminoimidazole-succinocarboxamide synthase.